We begin with the raw amino-acid sequence, 379 residues long: Chaperone protein DnaJ (379 aa).

A J domain is found at 5–70; sequence DYYEVLGVGK…EKKAAYDQYG (66 aa). Residues 139-217 form a CR-type zinc finger; the sequence is GHEAQIRVPH…CHGQGKLKSQ (79 aa). Zn(2+) contacts are provided by cysteine 152, cysteine 155, cysteine 169, cysteine 172, cysteine 191, cysteine 194, cysteine 205, and cysteine 208. CXXCXGXG motif repeat units follow at residues 152 to 159, 169 to 176, 191 to 198, and 205 to 212; these read CDHCHGNG, CPTCHGAG, CPKCHGSG, and CTKCHGQG. A disordered region spans residues 356–379; that stretch reads VHEGGSRHSPQEQSWLDKVKSFFS.

The protein belongs to the DnaJ family. As to quaternary structure, homodimer. Zn(2+) serves as cofactor.

It localises to the cytoplasm. Its function is as follows. Participates actively in the response to hyperosmotic and heat shock by preventing the aggregation of stress-denatured proteins and by disaggregating proteins, also in an autonomous, DnaK-independent fashion. Unfolded proteins bind initially to DnaJ; upon interaction with the DnaJ-bound protein, DnaK hydrolyzes its bound ATP, resulting in the formation of a stable complex. GrpE releases ADP from DnaK; ATP binding to DnaK triggers the release of the substrate protein, thus completing the reaction cycle. Several rounds of ATP-dependent interactions between DnaJ, DnaK and GrpE are required for fully efficient folding. Also involved, together with DnaK and GrpE, in the DNA replication of plasmids through activation of initiation proteins. The sequence is that of Chaperone protein DnaJ from Cupriavidus pinatubonensis (strain JMP 134 / LMG 1197) (Cupriavidus necator (strain JMP 134)).